Consider the following 694-residue polypeptide: MSRQVSLDRLRNIGIMAHIDAGKTTTTERILFYTGRTHKLGETHEGAATMDFMVQEQERGITIQSAATTCSWKDHRINIIDTPGHVDFTVEVERSLRVLDGAVAVFCAKGGVEPQSETVWRQADKYGVPRLAYVNKMDTIGADFFRVIRMMEERLGARPVPIQIPIGAEDTFRGVVDLVRNVAIMYYDDLGKDIREEPIPEDMRELVEQYRTRMIEAATEADDALMEKYLMGEELTVEEIKRGLRKLTVECKINPVCCGSSYKNKGVQPLLDAIVDYLPSPLDIPPVQGTDPETGEPAERKADDNEPFSALAFKVVSDPYVGKLCFFRVYSGQLKSGSYVLNATKGKRERIGRLVRMHANHREEVEVVETGDIAAAVGLKDTGTGDTLCTDAAPVILESMEFPEPVIQLAVEPKTKADQDKLSTALLKLAEEDPTFRMFTDPETGQTIIAGMGELHLEIIVDRLQREFKVGVNVGKPQVSYRETVRGRVENVEGRFVRQSGGRGQYGHVVINLEPAEPGSGFIFENKIVGGVIPKEFIGPVEQGIKEALQNGVLAGYPMIDVKVELVFGSYHEVDSSEAAFKIAGSMALKAAAQKAQPVLLEPYMRVEVTVPEEYMGDVIGDLNARRGRIEGMEARGNAQVIRAQVPLAEMFGYATDLRSRTQGRGVYSMQFDHYEEVPPNVAKPIIEKAQGKA.

Residues 8–282 (DRLRNIGIMA…AIVDYLPSPL (275 aa)) form the tr-type G domain. GTP-binding positions include 17-24 (AHIDAGKT), 81-85 (DTPGH), and 135-138 (NKMD). The interval 284–303 (IPPVQGTDPETGEPAERKAD) is disordered.

It belongs to the TRAFAC class translation factor GTPase superfamily. Classic translation factor GTPase family. EF-G/EF-2 subfamily.

Its subcellular location is the cytoplasm. In terms of biological role, catalyzes the GTP-dependent ribosomal translocation step during translation elongation. During this step, the ribosome changes from the pre-translocational (PRE) to the post-translocational (POST) state as the newly formed A-site-bound peptidyl-tRNA and P-site-bound deacylated tRNA move to the P and E sites, respectively. Catalyzes the coordinated movement of the two tRNA molecules, the mRNA and conformational changes in the ribosome. The sequence is that of Elongation factor G from Symbiobacterium thermophilum (strain DSM 24528 / JCM 14929 / IAM 14863 / T).